A 495-amino-acid chain; its full sequence is Bifunctional protein GlmU (495 aa).

The tract at residues M1–R241 is pyrophosphorylase. Residues L12 to G15, K26, Q83, G88 to T89, S112 to D114, G151, E166, N181, and N239 each bind UDP-N-acetyl-alpha-D-glucosamine. A Mg(2+)-binding site is contributed by D114. N239 is a Mg(2+) binding site. The interval V242–A262 is linker. Residues G263–P495 are N-acetyltransferase. Residues R344 and K362 each coordinate UDP-N-acetyl-alpha-D-glucosamine. H374 functions as the Proton acceptor in the catalytic mechanism. Positions 377 and 388 each coordinate UDP-N-acetyl-alpha-D-glucosamine. Residues A391, N397 to Y398, S416, and A434 each bind acetyl-CoA. The disordered stretch occupies residues I457 to P495. The span at Q483–P495 shows a compositional bias: low complexity.

In the N-terminal section; belongs to the N-acetylglucosamine-1-phosphate uridyltransferase family. The protein in the C-terminal section; belongs to the transferase hexapeptide repeat family. In terms of assembly, homotrimer. Requires Mg(2+) as cofactor.

Its subcellular location is the cytoplasm. The enzyme catalyses alpha-D-glucosamine 1-phosphate + acetyl-CoA = N-acetyl-alpha-D-glucosamine 1-phosphate + CoA + H(+). It catalyses the reaction N-acetyl-alpha-D-glucosamine 1-phosphate + UTP + H(+) = UDP-N-acetyl-alpha-D-glucosamine + diphosphate. Its pathway is nucleotide-sugar biosynthesis; UDP-N-acetyl-alpha-D-glucosamine biosynthesis; N-acetyl-alpha-D-glucosamine 1-phosphate from alpha-D-glucosamine 6-phosphate (route II): step 2/2. It participates in nucleotide-sugar biosynthesis; UDP-N-acetyl-alpha-D-glucosamine biosynthesis; UDP-N-acetyl-alpha-D-glucosamine from N-acetyl-alpha-D-glucosamine 1-phosphate: step 1/1. It functions in the pathway bacterial outer membrane biogenesis; LPS lipid A biosynthesis. Functionally, catalyzes the last two sequential reactions in the de novo biosynthetic pathway for UDP-N-acetylglucosamine (UDP-GlcNAc). The C-terminal domain catalyzes the transfer of acetyl group from acetyl coenzyme A to glucosamine-1-phosphate (GlcN-1-P) to produce N-acetylglucosamine-1-phosphate (GlcNAc-1-P), which is converted into UDP-GlcNAc by the transfer of uridine 5-monophosphate (from uridine 5-triphosphate), a reaction catalyzed by the N-terminal domain. The sequence is that of Bifunctional protein GlmU from Mycobacterium bovis (strain ATCC BAA-935 / AF2122/97).